The sequence spans 186 residues: Peptidyl-tRNA hydrolase (186 aa).

Tyr-14 lines the tRNA pocket. Residue His-19 is the Proton acceptor of the active site. The tRNA site is built by Tyr-61, Asn-63, and Asn-107.

It belongs to the PTH family. Monomer.

The protein localises to the cytoplasm. It carries out the reaction an N-acyl-L-alpha-aminoacyl-tRNA + H2O = an N-acyl-L-amino acid + a tRNA + H(+). Hydrolyzes ribosome-free peptidyl-tRNAs (with 1 or more amino acids incorporated), which drop off the ribosome during protein synthesis, or as a result of ribosome stalling. Its function is as follows. Catalyzes the release of premature peptidyl moieties from peptidyl-tRNA molecules trapped in stalled 50S ribosomal subunits, and thus maintains levels of free tRNAs and 50S ribosomes. This chain is Peptidyl-tRNA hydrolase, found in Helicobacter pylori (strain HPAG1).